The following is a 315-amino-acid chain: Peroxidase 1 (315 aa).

The signal sequence occupies residues 1–21; sequence MASSSYTSLLVLVALVTAASA. Gln22 bears the Pyrrolidone carboxylic acid mark. 4 disulfides stabilise this stretch: Cys32/Cys107, Cys65/Cys70, Cys113/Cys310, and Cys193/Cys219. His63 functions as the Proton acceptor in the catalytic mechanism. 5 residues coordinate Ca(2+): Asp64, Val67, Gly69, Asp71, and Ser73. Pro155 is a binding site for substrate. Residue Asn158 is glycosylated (N-linked (GlcNAc...) asparagine). Residue His186 coordinates heme b. Residue Thr187 participates in Ca(2+) binding. Positions 234, 237, and 242 each coordinate Ca(2+). Asn265 carries N-linked (GlcNAc...) asparagine glycosylation.

Belongs to the peroxidase family. Classical plant (class III) peroxidase subfamily. Ca(2+) is required as a cofactor. The cofactor is heme b.

It is found in the secreted. The enzyme catalyses 2 a phenolic donor + H2O2 = 2 a phenolic radical donor + 2 H2O. Its function is as follows. Removal of H(2)O(2), oxidation of toxic reductants, biosynthesis and degradation of lignin, suberization, auxin catabolism, response to environmental stresses such as wounding, pathogen attack and oxidative stress. These functions might be dependent on each isozyme/isoform in each plant tissue. In terms of biological role, involved in defense response to powdery meldew fungus. This is Peroxidase 1 from Hordeum vulgare (Barley).